The primary structure comprises 199 residues: N-(5'-phosphoribosyl)anthranilate isomerase (199 aa).

The protein belongs to the TrpF family.

It carries out the reaction N-(5-phospho-beta-D-ribosyl)anthranilate = 1-(2-carboxyphenylamino)-1-deoxy-D-ribulose 5-phosphate. Its pathway is amino-acid biosynthesis; L-tryptophan biosynthesis; L-tryptophan from chorismate: step 3/5. The polypeptide is N-(5'-phosphoribosyl)anthranilate isomerase (Solibacter usitatus (strain Ellin6076)).